Consider the following 138-residue polypeptide: Large ribosomal subunit protein uL16 (138 aa).

Positions 1-16 are enriched in basic residues; it reads MLIPRRVKHRKQHHPG. Residues 1-25 are disordered; it reads MLIPRRVKHRKQHHPGRSGAATGGT.

This sequence belongs to the universal ribosomal protein uL16 family. Part of the 50S ribosomal subunit.

Its function is as follows. Binds 23S rRNA and is also seen to make contacts with the A and possibly P site tRNAs. In Pseudarthrobacter chlorophenolicus (strain ATCC 700700 / DSM 12829 / CIP 107037 / JCM 12360 / KCTC 9906 / NCIMB 13794 / A6) (Arthrobacter chlorophenolicus), this protein is Large ribosomal subunit protein uL16.